A 424-amino-acid chain; its full sequence is Deoxyguanosinetriphosphate triphosphohydrolase-like protein (424 aa).

Positions 1–27 (MYPYSDADAFRRQPERAKSSQLRTSAV) are disordered. Residues 8–18 (DAFRRQPERAK) are compositionally biased toward basic and acidic residues. Positions 67–217 (RLTHSLEVAQ…MDFSDDIAYS (151 aa)) constitute an HD domain.

Belongs to the dGTPase family. Type 2 subfamily.

This is Deoxyguanosinetriphosphate triphosphohydrolase-like protein (dgt) from Corynebacterium glutamicum (strain ATCC 13032 / DSM 20300 / JCM 1318 / BCRC 11384 / CCUG 27702 / LMG 3730 / NBRC 12168 / NCIMB 10025 / NRRL B-2784 / 534).